Here is a 444-residue protein sequence, read N- to C-terminus: Glycogen synthase (444 aa).

R15 serves as a coordination point for ADP-alpha-D-glucose.

It belongs to the glycosyltransferase 1 family. Bacterial/plant glycogen synthase subfamily.

The catalysed reaction is [(1-&gt;4)-alpha-D-glucosyl](n) + ADP-alpha-D-glucose = [(1-&gt;4)-alpha-D-glucosyl](n+1) + ADP + H(+). It functions in the pathway glycan biosynthesis; glycogen biosynthesis. Synthesizes alpha-1,4-glucan chains using ADP-glucose. The chain is Glycogen synthase from Deinococcus radiodurans (strain ATCC 13939 / DSM 20539 / JCM 16871 / CCUG 27074 / LMG 4051 / NBRC 15346 / NCIMB 9279 / VKM B-1422 / R1).